A 67-amino-acid chain; its full sequence is Small, acid-soluble spore protein B (67 aa).

This sequence belongs to the alpha/beta-type SASP family.

Its function is as follows. SASP are bound to spore DNA. They are double-stranded DNA-binding proteins that cause DNA to change to an a-like conformation. They protect the DNA backbone from chemical and enzymatic cleavage and are thus involved in dormant spore's high resistance to UV light. This Bacillus subtilis (strain 168) protein is Small, acid-soluble spore protein B (sspB).